The following is a 281-amino-acid chain: MDFFNKFSQGLAESSTPKSSIYYSEEKDPDTKKDEAIEIGLKSQESYYQRQLREQLARDNMMTASRQPTQPLQPTIHITPQPVPTPTPAPILLPSSTAPVLKPRQQTNTSSDMSNLFDWLSTDTDAPASTLLPALTPSNTVQDIISKFNKDQKMTTPPSTQPSQTLPTTTCTQQSDGSISCTTPTVTPLQPPIVATVCTPTPTGGTVCTTAQQNPNPGAASQQNLDDMTLKDLMSSVEKDMRQLQAETNDLVTNVYDAREYTRRAIDQILQLVKGFERFQK.

The segment covering 1–22 (MDFFNKFSQGLAESSTPKSSIY) has biased composition (polar residues). 2 disordered regions span residues 1 to 33 (MDFFNKFSQGLAESSTPKSSIYYSEEKDPDTKK) and 149 to 186 (NKDQKMTTPPSTQPSQTLPTTTCTQQSDGSISCTTPTV). A compositionally biased stretch (basic and acidic residues) spans 24–33 (SEEKDPDTKK). The span at 155–175 (TTPPSTQPSQTLPTTTCTQQS) shows a compositional bias: low complexity. The span at 176–186 (DGSISCTTPTV) shows a compositional bias: polar residues.

It belongs to the orthopoxvirus OPG130 family. Interacts with OPG136 and its cleaved form. Post-translationally, its phosphorylation state is regulated by the OPG054 kinase and the OPG106 phosphatase.

The protein resides in the virion. It is found in the host endoplasmic reticulum-Golgi intermediate compartment membrane. In terms of biological role, component of the virion core. Participates in virion assembly. This is 39kDa core protein OPG130 (OPG130) from Cynomys gunnisoni (Gunnison's prairie dog).